The chain runs to 306 residues: UDP-3-O-acyl-N-acetylglucosamine deacetylase (306 aa).

Zn(2+) is bound by residues H79, H238, and D242. H265 functions as the Proton donor in the catalytic mechanism.

Belongs to the LpxC family. It depends on Zn(2+) as a cofactor.

The catalysed reaction is a UDP-3-O-[(3R)-3-hydroxyacyl]-N-acetyl-alpha-D-glucosamine + H2O = a UDP-3-O-[(3R)-3-hydroxyacyl]-alpha-D-glucosamine + acetate. The protein operates within glycolipid biosynthesis; lipid IV(A) biosynthesis; lipid IV(A) from (3R)-3-hydroxytetradecanoyl-[acyl-carrier-protein] and UDP-N-acetyl-alpha-D-glucosamine: step 2/6. Its function is as follows. Catalyzes the hydrolysis of UDP-3-O-myristoyl-N-acetylglucosamine to form UDP-3-O-myristoylglucosamine and acetate, the committed step in lipid A biosynthesis. The polypeptide is UDP-3-O-acyl-N-acetylglucosamine deacetylase (Shewanella sp. (strain W3-18-1)).